A 317-amino-acid chain; its full sequence is L-lactate dehydrogenase (317 aa).

Positions 16, 37, and 69 each coordinate NAD(+). Substrate-binding positions include Q86, R92, and 124–127 (NPVD). NAD(+)-binding positions include 122-124 (ASN) and S147. 152-155 (DSAR) lines the substrate pocket. The active-site Proton acceptor is H179. Residue Y223 is modified to Phosphotyrosine. Substrate is bound at residue T232.

This sequence belongs to the LDH/MDH superfamily. LDH family. In terms of assembly, homotetramer.

The protein localises to the cytoplasm. It catalyses the reaction (S)-lactate + NAD(+) = pyruvate + NADH + H(+). It functions in the pathway fermentation; pyruvate fermentation to lactate; (S)-lactate from pyruvate: step 1/1. Functionally, catalyzes the conversion of lactate to pyruvate. This Mycoplasma capricolum subsp. capricolum (strain California kid / ATCC 27343 / NCTC 10154) protein is L-lactate dehydrogenase.